The chain runs to 188 residues: Peptidyl-tRNA hydrolase (188 aa).

TRNA is bound at residue Tyr-14. His-19 serves as the catalytic Proton acceptor. 3 residues coordinate tRNA: Tyr-64, Asn-66, and Asn-112.

The protein belongs to the PTH family. In terms of assembly, monomer.

It is found in the cytoplasm. The catalysed reaction is an N-acyl-L-alpha-aminoacyl-tRNA + H2O = an N-acyl-L-amino acid + a tRNA + H(+). Functionally, hydrolyzes ribosome-free peptidyl-tRNAs (with 1 or more amino acids incorporated), which drop off the ribosome during protein synthesis, or as a result of ribosome stalling. Its function is as follows. Catalyzes the release of premature peptidyl moieties from peptidyl-tRNA molecules trapped in stalled 50S ribosomal subunits, and thus maintains levels of free tRNAs and 50S ribosomes. The protein is Peptidyl-tRNA hydrolase of Leuconostoc mesenteroides subsp. mesenteroides (strain ATCC 8293 / DSM 20343 / BCRC 11652 / CCM 1803 / JCM 6124 / NCDO 523 / NBRC 100496 / NCIMB 8023 / NCTC 12954 / NRRL B-1118 / 37Y).